A 523-amino-acid polypeptide reads, in one-letter code: Cryptochrome DASH (523 aa).

The region spanning 6 to 142 (RVIICLLRND…KYQTFWGSTL (137 aa)) is the Photolyase/cryptochrome alpha/beta domain. 2 disordered regions span residues 174–211 (RPTFQMPDKLKPLPSGLEEGSVPSHEDFDQQDPLTDPR) and 486–523 (KPAGSWEKSARRGKGPSHTPKQHKNRGIDFYFSRNKDV). The segment covering 496–510 (RRGKGPSHTPKQHKN) has biased composition (basic residues).

It belongs to the DNA photolyase class-1 family. The cofactor is FAD. Requires (6R)-5,10-methylene-5,6,7,8-tetrahydrofolate as cofactor.

Its function is as follows. May have a photoreceptor function. Has weak cyclobutyl pyrimidine photolyase activity when expressed in E.coli and when tested in vitro. This Xenopus laevis (African clawed frog) protein is Cryptochrome DASH (cry-dash).